The primary structure comprises 291 residues: Meteorin (291 aa).

Positions 1 to 21 are cleaved as a signal peptide; it reads MLVATLLCALCCGLLAASAHA. Intrachain disulfides connect C28–C49, C80–C116, C169–C240, C172–C264, and C182–C286.

This sequence belongs to the meteorin family. In terms of assembly, monomer. As to expression, highly expressed in brain. Expressed in undifferentiated neural progenitors and in astrocyte lineage, particularly in Bergmann glia, a subtype of radial glia, and a few discrete neuronal populations residing in the superior colliculus, the ocular motor nucleus, the raphe and pontine nuclei, and in various thalamic nuclei. Weakly expressed in heart, kidney, skeletal muscle, spleen, testis, gut and lung.

It localises to the secreted. Functionally, involved in both glial cell differentiation and axonal network formation during neurogenesis. Promotes astrocyte differentiation and transforms cerebellar astrocytes into radial glia. Also induces axonal extension in small and intermediate neurons of sensory ganglia by activating nearby satellite glia. This chain is Meteorin (Metrn), found in Mus musculus (Mouse).